A 277-amino-acid chain; its full sequence is MKVISSIHELRDQLRGQNRTAFVPTMGNLHEGHLSLMRLARQHGDPVVASIFVNRLQFGPNEDFDKYPRTMEADIEKLQKENVYVLFAPTEKDLYPEPQEYRVHPPHDLGDILEGEFRPGFFQGVCTVVMKLMSCVQPRVAVFGKKDYQQLMIVRRMCNQFALPTDIIAAETVRDADGLALSSRNRYLQAAERAEAPRLAAELNQVREAVLGGERDFAKIERAAMAALAARGWQPDYIAVRKRSNLLPPGPEDANAELVVLAAARLGATRLIDNLEI.

An ATP-binding site is contributed by M26–H33. Residue H33 is the Proton donor of the active site. Q57 is a binding site for (R)-pantoate. A beta-alanine-binding site is contributed by Q57. Residue G144–D147 coordinates ATP. Q150 provides a ligand contact to (R)-pantoate. ATP contacts are provided by residues V173 and L181–R184.

It belongs to the pantothenate synthetase family. As to quaternary structure, homodimer.

The protein resides in the cytoplasm. The catalysed reaction is (R)-pantoate + beta-alanine + ATP = (R)-pantothenate + AMP + diphosphate + H(+). The protein operates within cofactor biosynthesis; (R)-pantothenate biosynthesis; (R)-pantothenate from (R)-pantoate and beta-alanine: step 1/1. Catalyzes the condensation of pantoate with beta-alanine in an ATP-dependent reaction via a pantoyl-adenylate intermediate. The polypeptide is Pantothenate synthetase (Paraburkholderia xenovorans (strain LB400)).